The primary structure comprises 203 residues: NAD(P)H dehydrogenase (quinone) (203 aa).

Residues 3–194 enclose the Flavodoxin-like domain; sequence IMVVYYSAYG…AGANFQGRHV (192 aa). FMN is bound by residues 9 to 14 and 82 to 84; these read SAYGHV and ARF. Tyr11 contacts NAD(+). Trp102 provides a ligand contact to substrate. Residues 117–123 and His138 each bind FMN; that span reads STGTQHG.

Belongs to the WrbA family. It depends on FMN as a cofactor.

It catalyses the reaction a quinone + NADH + H(+) = a quinol + NAD(+). It carries out the reaction a quinone + NADPH + H(+) = a quinol + NADP(+). This Syntrophus aciditrophicus (strain SB) protein is NAD(P)H dehydrogenase (quinone).